Reading from the N-terminus, the 239-residue chain is Demethylmenaquinone methyltransferase (239 aa).

S-adenosyl-L-methionine contacts are provided by residues T68, D86, and 111-112 (NG).

The protein belongs to the class I-like SAM-binding methyltransferase superfamily. MenG/UbiE family.

The catalysed reaction is a 2-demethylmenaquinol + S-adenosyl-L-methionine = a menaquinol + S-adenosyl-L-homocysteine + H(+). Its pathway is quinol/quinone metabolism; menaquinone biosynthesis; menaquinol from 1,4-dihydroxy-2-naphthoate: step 2/2. Methyltransferase required for the conversion of demethylmenaquinol (DMKH2) to menaquinol (MKH2). The polypeptide is Demethylmenaquinone methyltransferase (Tropheryma whipplei (strain TW08/27) (Whipple's bacillus)).